We begin with the raw amino-acid sequence, 245 residues long: Small ribosomal subunit protein uS2 (245 aa).

The protein belongs to the universal ribosomal protein uS2 family.

This chain is Small ribosomal subunit protein uS2, found in Dehalococcoides mccartyi (strain CBDB1).